A 300-amino-acid polypeptide reads, in one-letter code: Ornithine carbamoyltransferase (300 aa).

Carbamoyl phosphate contacts are provided by residues 51–54, glutamine 78, arginine 102, and 129–132; these read STRT and HPCQ. Residues asparagine 160, aspartate 217, and 221 to 222 contribute to the L-ornithine site; that span reads SM. Carbamoyl phosphate is bound by residues 257-258 and arginine 285; that span reads CL.

Belongs to the aspartate/ornithine carbamoyltransferase superfamily. OTCase family.

It localises to the cytoplasm. It carries out the reaction carbamoyl phosphate + L-ornithine = L-citrulline + phosphate + H(+). It functions in the pathway amino-acid biosynthesis; L-arginine biosynthesis; L-arginine from L-ornithine and carbamoyl phosphate: step 1/3. Functionally, reversibly catalyzes the transfer of the carbamoyl group from carbamoyl phosphate (CP) to the N(epsilon) atom of ornithine (ORN) to produce L-citrulline. The polypeptide is Ornithine carbamoyltransferase (Halorhodospira halophila (strain DSM 244 / SL1) (Ectothiorhodospira halophila (strain DSM 244 / SL1))).